An 86-amino-acid polypeptide reads, in one-letter code: Exodeoxyribonuclease 7 small subunit (86 aa).

The protein belongs to the XseB family. As to quaternary structure, heterooligomer composed of large and small subunits.

It is found in the cytoplasm. It carries out the reaction Exonucleolytic cleavage in either 5'- to 3'- or 3'- to 5'-direction to yield nucleoside 5'-phosphates.. In terms of biological role, bidirectionally degrades single-stranded DNA into large acid-insoluble oligonucleotides, which are then degraded further into small acid-soluble oligonucleotides. In Xanthomonas axonopodis pv. citri (strain 306), this protein is Exodeoxyribonuclease 7 small subunit.